The sequence spans 240 residues: Type II restriction enzyme DdeI (240 aa).

It carries out the reaction Endonucleolytic cleavage of DNA to give specific double-stranded fragments with terminal 5'-phosphates.. Functionally, a P subtype restriction enzyme that recognizes the double-stranded sequence 5'-CTNAG-3' and cleaves after C-1. The sequence is that of Type II restriction enzyme DdeI (ddeIR) from Desulfomicrobium norvegicum (strain DSM 1741 / NCIMB 8310) (Desulfovibrio baculatus (strain Norway 4)).